The primary structure comprises 378 residues: Putative F-box only protein 15 (378 aa).

Residues 5-52 (KRVYRSLPFELVEEILKKTPAESLNRFKSTCKQWYGIITSKRFMYNHL) form the F-box domain.

This is Putative F-box only protein 15 (FBX15) from Arabidopsis thaliana (Mouse-ear cress).